The following is a 732-amino-acid chain: Elongation factor 2 (732 aa).

A tr-type G domain is found at 19-260; that stretch reads ERIRNIGIAA…MVVRHLPSPI (242 aa). GTP-binding positions include 28–35, 94–98, and 148–151; these read AHIDHGKT, DTPGH, and NKVD. Histidine 597 carries the diphthamide modification.

The protein belongs to the TRAFAC class translation factor GTPase superfamily. Classic translation factor GTPase family. EF-G/EF-2 subfamily.

It localises to the cytoplasm. In terms of biological role, catalyzes the GTP-dependent ribosomal translocation step during translation elongation. During this step, the ribosome changes from the pre-translocational (PRE) to the post-translocational (POST) state as the newly formed A-site-bound peptidyl-tRNA and P-site-bound deacylated tRNA move to the P and E sites, respectively. Catalyzes the coordinated movement of the two tRNA molecules, the mRNA and conformational changes in the ribosome. The polypeptide is Elongation factor 2 (fusA) (Pyrococcus furiosus (strain ATCC 43587 / DSM 3638 / JCM 8422 / Vc1)).